The chain runs to 216 residues: Elongation factor 1-beta (216 aa).

Positions 71 to 131 are disordered; it reads GQASGVSASS…AKKKESGKSS (61 aa). Positions 73–89 are enriched in low complexity; sequence ASGVSASSAPAAAAPAA. Residues 92-107 are compositionally biased toward acidic residues; the sequence is DEDDDDDMDLFGDETE. A compositionally biased stretch (basic and acidic residues) spans 108–128; that stretch reads EDKKAAAEREAAKPAKKKESG.

It belongs to the EF-1-beta/EF-1-delta family. In terms of assembly, EF-1 is composed of 4 subunits: alpha, beta (1B-alpha=beta'), delta (1B-beta), and gamma (1B-gamma).

Its function is as follows. EF-1-beta and EF-1-beta' stimulate the exchange of GDP bound to EF-1-alpha to GTP. The chain is Elongation factor 1-beta from Triticum aestivum (Wheat).